Here is a 772-residue protein sequence, read N- to C-terminus: Ion-translocating oxidoreductase complex subunit C (772 aa).

4Fe-4S ferredoxin-type domains are found at residues glycine 369 to tyrosine 397 and lysine 407 to phenylalanine 436. [4Fe-4S] cluster-binding residues include cysteine 377, cysteine 380, cysteine 383, cysteine 387, cysteine 416, cysteine 419, cysteine 422, and cysteine 426. 3 disordered regions span residues lysine 602–lysine 684, alanine 696–alanine 717, and lysine 727–proline 746. Residues glutamine 605–glutamine 615 are compositionally biased toward low complexity.

Belongs to the 4Fe4S bacterial-type ferredoxin family. RnfC subfamily. In terms of assembly, the complex is composed of six subunits: RsxA, RsxB, RsxC, RsxD, RsxE and RsxG. The cofactor is [4Fe-4S] cluster.

It localises to the cell inner membrane. Functionally, part of a membrane-bound complex that couples electron transfer with translocation of ions across the membrane. Required to maintain the reduced state of SoxR. This Escherichia coli O157:H7 (strain EC4115 / EHEC) protein is Ion-translocating oxidoreductase complex subunit C.